We begin with the raw amino-acid sequence, 510 residues long: Global transcription regulator sge1 (510 aa).

Disordered regions lie at residues 94 to 152 (PPGE…ASRN), 393 to 438 (HPFM…QQHS), and 469 to 510 (LGGT…MGRL). The segment covering 123 to 143 (NTGMNGTATGANAANLSSAGS) has biased composition (low complexity). 2 stretches are compositionally biased toward polar residues: residues 471–480 (GTNTDQSQPF) and 501–510 (PGSNNSMGRL).

The protein belongs to the MIT1/WOR1 family.

It localises to the nucleus. Global transcriptional regulator of pathogenicity. Differentially regulates expression of effector genes. Also required for radial growth and production of asexual conidiospores, and plays a role in mycelium pigmentation. Not required for induction of Ave1, the effector that activates resistance mediated by the Ve1 immune receptor in tomato. This Verticillium dahliae (strain VdLs.17 / ATCC MYA-4575 / FGSC 10137) (Verticillium wilt) protein is Global transcription regulator sge1.